Consider the following 255-residue polypeptide: NAD kinase (255 aa).

Asp44 serves as the catalytic Proton acceptor. Residues 44–45 (DG), His49, 114–115 (NE), Asp144, Ala152, 155–160 (SAYNLS), and Gln216 contribute to the NAD(+) site.

It belongs to the NAD kinase family. It depends on a divalent metal cation as a cofactor.

Its subcellular location is the cytoplasm. The catalysed reaction is NAD(+) + ATP = ADP + NADP(+) + H(+). In terms of biological role, involved in the regulation of the intracellular balance of NAD and NADP, and is a key enzyme in the biosynthesis of NADP. Catalyzes specifically the phosphorylation on 2'-hydroxyl of the adenosine moiety of NAD to yield NADP. The chain is NAD kinase from Rickettsia conorii (strain ATCC VR-613 / Malish 7).